The sequence spans 538 residues: MAQKPLRLLTCGDVEGKFDILFNRVQAIQKKSGNFDLLLCVGNFFGSTPDAEWEEYKTGTKKAPIQTYVLGANNQETVKYFQDADGCELAENITYLGRKGIFTGSSGLQIVYLSGTESLNEPVPGYSFSPKDVSSLRTMLCTTSQFKGVDILLTSPWPKYVGNFGNSSGEVDTKKCGSALVSSLATGLKPRYHFAALEKTYYERLPYRNHIVLQENAQHATRFIALANVGNPEKKKYLYAFSIVPMKLMDAAELVKQPPDVTENPYRKSGQEASTGKQILAPVEESACQFFFDLNEKQGRKRSSTGRDSKSSPHPKQPRKPPQPPGPCWFCLASPEVEKHLVVNIGTHCYLALAKGGLSDDHVLILPIGHYQSVVELSAEVVEEVEKYKATLRRFFKSRGKRCVVFERNYKSHHLQLQVIPVPVSCCATDDIKDAFITQAQEQQIELLEIPEHSDIKQIAQPGAAYFYVELDTGEKLFHRIKKNFPLQFGREVLASEAILNVPDKSDWRQCQISKEDEETLARCFRKDFEPYDFTLDD.

Disordered stretches follow at residues proline 259 to glutamine 278 and glutamine 298 to proline 324.

This sequence belongs to the CWF19 family.

In Pongo abelii (Sumatran orangutan), this protein is CWF19-like protein 1 (CWF19L1).